Reading from the N-terminus, the 292-residue chain is Putative peptidyl-prolyl cis-trans isomerase NifM (292 aa).

Residues 148 to 243 (HILVTINEDF…IGFHVLYCES (96 aa)) enclose the PpiC domain.

It belongs to the PpiC/parvulin rotamase family.

The enzyme catalyses [protein]-peptidylproline (omega=180) = [protein]-peptidylproline (omega=0). Required for the activation and stabilization of the iron-component (NifH) of nitrogenase. Probable PPIase. This is Putative peptidyl-prolyl cis-trans isomerase NifM (nifM) from Azotobacter vinelandii.